The chain runs to 485 residues: Portal protein (485 aa).

The tract at residues 456 to 485 (MVDADPTVPGSPNPTPAPKPQPAIEGGDSA) is disordered. Pro residues predominate over residues 464–476 (PGSPNPTPAPKPQ).

The protein belongs to the SPP1-like portal protein family. In terms of assembly, homododecamer.

It localises to the virion. Forms the portal vertex of the capsid. This portal plays critical roles in head assembly, genome packaging, neck/tail attachment, and genome ejection. The portal protein multimerizes as a single ring-shaped homododecamer arranged around a central channel. Binds to the terminase subunits to form the packaging machine. The protein is Portal protein (14) of Mycobacterium (Mycobacteriophage D29).